The primary structure comprises 314 residues: MISICCSRFSCILFLLFLIFSLVLSYIWWSPTKGGTNPEVLPVVLWHGMGDTCCVPFSLGAIMNLIVEQTKGGYVRSLQIGGNVLIDWQSGFFIHPNEQVDYVCKQLLQDEHLAKGYHAIGFSQGGQFLRAVAERCPNPPMRNLITLGGQHQGIFGLPMCPTLTEKPCDYITRLLDNAAYAPEVQKALVQATYWHDPIMENKYRLGSTFLADINNELFINKFYIENLQKLKKFVMVQFLNDTIVQPKESQWFQYYTTGQNKVIQPFTESKVYQDLGLDKMHRQGQLVFLGVEGDHLAISKAWFIQNIVPLLLEK.

The signal sequence occupies residues 1-25 (MISICCSRFSCILFLLFLIFSLVLS). Cystine bridges form between Cys-53–Cys-54, Cys-104–Cys-136, and Cys-160–Cys-168. Residue Ser-123 is the Nucleophile of the active site. A glycan (N-linked (GlcNAc...) asparagine) is linked at Asn-240. Catalysis depends on residues Asp-241 and His-295.

The protein belongs to the palmitoyl-protein thioesterase family. In terms of tissue distribution, ubiquitously expressed.

It is found in the lysosome. It carries out the reaction S-hexadecanoyl-L-cysteinyl-[protein] + H2O = L-cysteinyl-[protein] + hexadecanoate + H(+). In terms of biological role, cleaves thioester-linked long fatty acyl groups such as palmitate from modified cysteine residues in proteins or peptides. The chain is Palmitoyl-protein thioesterase 1 (Ppt1) from Drosophila melanogaster (Fruit fly).